We begin with the raw amino-acid sequence, 243 residues long: MTDTSTPDHANRTALVLFSGGQDSATCLAWALQRYARVETVGFDYGQRHHVEMTARERVRSGLAASFPHWGDRLGEDFVIDLAGYGAIADSALTADRAIEMQANGLPSTFVPGRNLVFLTVASALAYRRGHGVLVGGMCETDFSGYPDCRRNTIDAMQTALGLGLEMAVEIATPLMHLDKAATWALAHQLGGDALIGLIEEDSHTCYRGERGKRHAWGYGCGDCPACELRANGHAAWQNSVPA.

18–28 (FSGGQDSATCL) contacts ATP. Zn(2+) is bound by residues Cys-206, Cys-221, Cys-224, and Cys-227.

It belongs to the QueC family. Requires Zn(2+) as cofactor.

The catalysed reaction is 7-carboxy-7-deazaguanine + NH4(+) + ATP = 7-cyano-7-deazaguanine + ADP + phosphate + H2O + H(+). It functions in the pathway purine metabolism; 7-cyano-7-deazaguanine biosynthesis. Functionally, catalyzes the ATP-dependent conversion of 7-carboxy-7-deazaguanine (CDG) to 7-cyano-7-deazaguanine (preQ(0)). This chain is 7-cyano-7-deazaguanine synthase, found in Maricaulis maris (strain MCS10) (Caulobacter maris).